Here is a 157-residue protein sequence, read N- to C-terminus: Ribosome maturation factor RimP (157 aa).

Belongs to the RimP family.

It localises to the cytoplasm. Its function is as follows. Required for maturation of 30S ribosomal subunits. The polypeptide is Ribosome maturation factor RimP (Limosilactobacillus reuteri (strain DSM 20016) (Lactobacillus reuteri)).